A 77-amino-acid chain; its full sequence is Small ribosomal subunit protein bS20 (77 aa).

It belongs to the bacterial ribosomal protein bS20 family.

Binds directly to 16S ribosomal RNA. This Streptococcus uberis (strain ATCC BAA-854 / 0140J) protein is Small ribosomal subunit protein bS20.